The sequence spans 407 residues: Na(+)-translocating NADH-quinone reductase subunit F (407 aa).

Residues 3-23 (IILGVVMFTLIVLALTVMILF) traverse the membrane as a helical segment. The 2Fe-2S ferredoxin-type domain occupies 32–126 (GDITIDINED…NLKIELPEEI (95 aa)). [2Fe-2S] cluster contacts are provided by cysteine 69, cysteine 75, cysteine 78, and cysteine 110. In terms of domain architecture, FAD-binding FR-type spans 129-269 (VKKWECEVIS…SGPFGEFFAK (141 aa)).

The protein belongs to the NqrF family. As to quaternary structure, composed of six subunits; NqrA, NqrB, NqrC, NqrD, NqrE and NqrF. The cofactor is [2Fe-2S] cluster. It depends on FAD as a cofactor.

It is found in the cell inner membrane. The catalysed reaction is a ubiquinone + n Na(+)(in) + NADH + H(+) = a ubiquinol + n Na(+)(out) + NAD(+). Functionally, NQR complex catalyzes the reduction of ubiquinone-1 to ubiquinol by two successive reactions, coupled with the transport of Na(+) ions from the cytoplasm to the periplasm. The first step is catalyzed by NqrF, which accepts electrons from NADH and reduces ubiquinone-1 to ubisemiquinone by a one-electron transfer pathway. The chain is Na(+)-translocating NADH-quinone reductase subunit F from Yersinia enterocolitica serotype O:8 / biotype 1B (strain NCTC 13174 / 8081).